The sequence spans 87 residues: Asparagine--tRNA ligase, cytoplasmic (87 aa).

The protein belongs to the class-II aminoacyl-tRNA synthetase family.

The protein resides in the cytoplasm. The catalysed reaction is tRNA(Asn) + L-asparagine + ATP = L-asparaginyl-tRNA(Asn) + AMP + diphosphate + H(+). This is Asparagine--tRNA ligase, cytoplasmic (DED81) from Saccharomyces paradoxus (Yeast).